Consider the following 152-residue polypeptide: uncharacterized protein (152 aa).

It belongs to the antirestriction protein family.

This is an uncharacterized protein from Escherichia coli (strain K12).